The sequence spans 406 residues: Coenzyme A biosynthesis bifunctional protein CoaBC (406 aa).

Residues 2-190 form a phosphopantothenoylcysteine decarboxylase region; sequence SLAGKKIVLG…SPVNDLKHLN (189 aa). The active-site Proton donor is the C158. The tract at residues 191-406 is phosphopantothenate--cysteine ligase; sequence IMITAGPTRE…VTRYDEKNRR (216 aa). CTP-binding positions include 273 to 275, D279, K289, 308 to 311, F327, K341, and K345; these read GCA and PDIV.

In the N-terminal section; belongs to the HFCD (homo-oligomeric flavin containing Cys decarboxylase) superfamily. The protein in the C-terminal section; belongs to the PPC synthetase family. Requires Mg(2+) as cofactor. FMN is required as a cofactor.

It catalyses the reaction N-[(R)-4-phosphopantothenoyl]-L-cysteine + H(+) = (R)-4'-phosphopantetheine + CO2. It carries out the reaction (R)-4'-phosphopantothenate + L-cysteine + CTP = N-[(R)-4-phosphopantothenoyl]-L-cysteine + CMP + diphosphate + H(+). It functions in the pathway cofactor biosynthesis; coenzyme A biosynthesis; CoA from (R)-pantothenate: step 2/5. The protein operates within cofactor biosynthesis; coenzyme A biosynthesis; CoA from (R)-pantothenate: step 3/5. Catalyzes two sequential steps in the biosynthesis of coenzyme A. In the first step cysteine is conjugated to 4'-phosphopantothenate to form 4-phosphopantothenoylcysteine. In the second step the latter compound is decarboxylated to form 4'-phosphopantotheine. The sequence is that of Coenzyme A biosynthesis bifunctional protein CoaBC from Escherichia coli O6:H1 (strain CFT073 / ATCC 700928 / UPEC).